Here is a 1003-residue protein sequence, read N- to C-terminus: DNA topoisomerase 3-alpha (1003 aa).

The Toprim domain maps to 35–179 (KVLCVAEKND…NLRVLRARFS (145 aa)). Residues 197–617 (DQRVSDAVDV…QQVQKYKQVF (421 aa)) form the Topo IA-type catalytic domain. Residue Y362 is the O-(5'-phospho-DNA)-tyrosine intermediate of the active site. The disordered stretch occupies residues 400 to 426 (GGPTPRNGSKSDQAHPPIHPTKYTSGL). Residues 658-685 (CPQCNKDMVLKTKKSGGFYLSCMGFPEC) form a C4-type zinc finger. 4 residues coordinate Zn(2+): C815, C817, C840, and C845. The segment at 815–854 (CNCGREAVLLTVRKQGPNQGRHFYKCSNGDCNFFLWADSS) adopts a GRF-type 1 zinc-finger fold. The tract at residues 856-888 (STGGGTPTSASGPPGSSVGCPSSVGSHMDGFGS) is disordered. Low complexity predominate over residues 862–888 (PTSASGPPGSSVGCPSSVGSHMDGFGS). Residues C899, C901, C924, and C932 each contribute to the Zn(2+) site. The GRF-type 2 zinc finger occupies 899–941 (CLCGQPAVTRTVQKDGPNKGRQFHTCAKPREQQCGFFQWVDEN). Residues 946–991 (SFAAPAWPGGRGKAQRPEAASKRPRAGSSDAGSTVKKPRKCSLCHQ) are disordered.

This sequence belongs to the type IA topoisomerase family. Binds ssDNA. Interacts (via N-terminal region) with BLM; the interaction is direct. Directly interacts with RMI1. Component of the RMI complex, containing at least TOP3A, RMI1 and RMI2. The RMI complex interacts with BLM. It depends on Mg(2+) as a cofactor. In terms of tissue distribution, highly expressed in testis.

The protein localises to the mitochondrion matrix. The catalysed reaction is ATP-independent breakage of single-stranded DNA, followed by passage and rejoining.. Releases the supercoiling and torsional tension of DNA introduced during the DNA replication and transcription by transiently cleaving and rejoining one strand of the DNA duplex. Introduces a single-strand break via transesterification at a target site in duplex DNA. The scissile phosphodiester is attacked by the catalytic tyrosine of the enzyme, resulting in the formation of a DNA-(5'-phosphotyrosyl)-enzyme intermediate and the expulsion of a 3'-OH DNA strand. The free DNA strand then undergoes passage around the unbroken strand thus removing DNA supercoils. Finally, in the religation step, the DNA 3'-OH attacks the covalent intermediate to expel the active-site tyrosine and restore the DNA phosphodiester backbone. As an essential component of the RMI complex it is involved in chromosome separation and the processing of homologous recombination intermediates to limit DNA crossover formation in cells. Has DNA decatenation activity. It is required for mtDNA decatenation and segregation after completion of replication, in a process that does not require BLM, RMI1 and RMI2. The protein is DNA topoisomerase 3-alpha (Top3a) of Mus musculus (Mouse).